We begin with the raw amino-acid sequence, 86 residues long: Small ribosomal subunit protein bS16 (86 aa).

Belongs to the bacterial ribosomal protein bS16 family.

In Legionella pneumophila (strain Paris), this protein is Small ribosomal subunit protein bS16.